The chain runs to 347 residues: Violet-sensitive opsin (347 aa).

Residues 1 to 31 lie on the Extracellular side of the membrane; the sequence is MLEEEDFYLFKNVSNVSPFDGPQYHIAPKWA. Asparagine 12 carries N-linked (GlcNAc...) asparagine glycosylation. Residues 32–56 form a helical membrane-spanning segment; it reads FTLQAIFMGMVFLIGTPLNFIVLLV. At 57-68 the chain is on the cytoplasmic side; it reads TIKYKKLRQPLN. The chain crosses the membrane as a helical span at residues 69 to 94; the sequence is YILVNITVGGFLMCIFSIFPVFVSSS. The Extracellular portion of the chain corresponds to 95 to 108; it reads QGYFFFGRIACSID. Cysteine 105 and cysteine 182 form a disulfide bridge. The helical transmembrane segment at 109–128 threads the bilayer; it reads AFVGTLTGLVTGWSLAFLAF. At 129-147 the chain is on the cytoplasmic side; the sequence is ERYIVICKPMGNFNFSSSH. A helical transmembrane segment spans residues 148-171; that stretch reads ALAVVICTWIIGIVVSVPPFLGWS. Residues 172 to 197 are Extracellular-facing; sequence RYMPEGLQCSCGPDWYTVGTKYRSEY. Residues 198-225 form a helical membrane-spanning segment; that stretch reads YTWFIFIFCFVIPLSLICFSYGRLLGAL. Over 226–247 the chain is Cytoplasmic; it reads RAVAAQQQESASTQKAEREVSR. Residues 248–271 traverse the membrane as a helical segment; the sequence is MVIFMVGSFCLCYVPYAAMAMYMV. Residues 272 to 279 lie on the Extracellular side of the membrane; the sequence is TNRNHGLD. The chain crosses the membrane as a helical span at residues 280-304; that stretch reads LRLVTIPAFFSKSSCVYNPIIYSFM. The residue at position 291 (lysine 291) is an N6-(retinylidene)lysine. Residues 305 to 347 lie on the Cytoplasmic side of the membrane; it reads NKQFRGCIMETVCGRPMSDDSSVSSTSQRTEVSTVSSSQVSPA. The segment at 323–347 is disordered; sequence DDSSVSSTSQRTEVSTVSSSQVSPA.

The protein belongs to the G-protein coupled receptor 1 family. Opsin subfamily. Phosphorylated on some or all of the serine and threonine residues present in the C-terminal region. The color pigments are found in the cone photoreceptor cells.

It localises to the membrane. In terms of biological role, visual pigments are the light-absorbing molecules that mediate vision. They consist of an apoprotein, opsin, covalently linked to cis-retinal. The protein is Violet-sensitive opsin of Xenopus laevis (African clawed frog).